We begin with the raw amino-acid sequence, 162 residues long: Thy-1 membrane glycoprotein (162 aa).

The first 19 residues, 1-19 (MNPAISVALLLSVLQVSRG), serve as a signal peptide directing secretion. Gln20 is modified (pyrrolidone carboxylic acid). The Ig-like V-type domain occupies 20 to 127 (QKVTSLTACL…NKSISVYRDK (108 aa)). 2 cysteine pairs are disulfide-bonded: Cys28–Cys131 and Cys38–Cys105. N-linked (GlcNAc...) asparagine glycosylation is found at Asn42, Asn94, and Asn118. Cys131 carries GPI-anchor amidated cysteine; alternate lipidation. Residues 132-162 (GGISLLVQNTSWMLLLLLSLSLLQALDFISL) constitute a propeptide, removed in mature form.

The protein localises to the cell membrane. Its function is as follows. May play a role in cell-cell or cell-ligand interactions during synaptogenesis and other events in the brain. The chain is Thy-1 membrane glycoprotein (Thy1) from Mus musculus (Mouse).